Here is a 319-residue protein sequence, read N- to C-terminus: Ribose-phosphate pyrophosphokinase (319 aa).

Residues 40-42 and 99-100 contribute to the ATP site; these read DGE and RQ. Mg(2+)-binding residues include His-134 and Asp-174. The active site involves Lys-198. D-ribose 5-phosphate contacts are provided by residues Arg-200, Asp-224, and 228–232; that span reads DTAGT.

It belongs to the ribose-phosphate pyrophosphokinase family. Class I subfamily. As to quaternary structure, homohexamer. Mg(2+) serves as cofactor.

Its subcellular location is the cytoplasm. It carries out the reaction D-ribose 5-phosphate + ATP = 5-phospho-alpha-D-ribose 1-diphosphate + AMP + H(+). Its pathway is metabolic intermediate biosynthesis; 5-phospho-alpha-D-ribose 1-diphosphate biosynthesis; 5-phospho-alpha-D-ribose 1-diphosphate from D-ribose 5-phosphate (route I): step 1/1. Involved in the biosynthesis of the central metabolite phospho-alpha-D-ribosyl-1-pyrophosphate (PRPP) via the transfer of pyrophosphoryl group from ATP to 1-hydroxyl of ribose-5-phosphate (Rib-5-P). This chain is Ribose-phosphate pyrophosphokinase, found in Xanthomonas axonopodis pv. citri (strain 306).